The chain runs to 365 residues: Cyclin-O protein B (365 aa).

Positions 22–64 (SGKRKRDSVYSPGDATPGDRGEGEPKCPSVGTKKRAKYSRHRK) are disordered. Positions 53-64 (TKKRAKYSRHRK) are enriched in basic residues.

The protein belongs to the cyclin family.

Its subcellular location is the cytoplasm. Its function is as follows. Specifically required for generation of multiciliated cells, possibly by promoting a cell cycle state compatible with centriole amplification and maturation. Acts downstream of mcidas to promote mother centriole amplification and maturation in preparation for apical docking. This is Cyclin-O protein B (ccno-b) from Xenopus laevis (African clawed frog).